Reading from the N-terminus, the 220-residue chain is PKHD-type hydroxylase PCC7424_1929 (220 aa).

Residues 77–173 (KIHSLLFSRY…RLVAVGWVQS (97 aa)) enclose the Fe2OG dioxygenase domain. Positions 95, 97, and 154 each coordinate Fe cation. Arg-164 is a binding site for 2-oxoglutarate.

Requires Fe(2+) as cofactor. L-ascorbate serves as cofactor.

The protein is PKHD-type hydroxylase PCC7424_1929 of Gloeothece citriformis (strain PCC 7424) (Cyanothece sp. (strain PCC 7424)).